A 497-amino-acid chain; its full sequence is WASH complex subunit homolog 1 (497 aa).

Residues 306 to 497 (EASEPTEAEA…PPNFDDEEWD (192 aa)) form a disordered region. A compositionally biased stretch (pro residues) spans 323 to 339 (LPPPPPPMKLDPSPQPA). The span at 341-350 (TPVEITEIPP) shows a compositional bias: low complexity. Over residues 351–372 (IISPPAPPPPPPPPPPPPPPQT) the composition is skewed to pro residues. One can recognise a WH2 domain in the interval 390 to 412 (GRSDLMAAIRAAGGAGNAKLSRI).

Belongs to the WASH1 family. Component of the WASH core complex. Component of the DHIC (ddl-1-containing hsf-1 inhibitory) complex, which contains at least ddl-1, ddl-2, hsb-1 and hsf-1. Within the complex, interacts with ddl-1. Formation of the DHIC may be dependent upon the Insulin/IGF-1-like signaling (IIS) mediated pathway. Expressed in several neurons located throughout the body.

Its function is as follows. Acts as a component of the WASH core complex that functions as a nucleation-promoting factor (NPF) at the surface of endosomes, where it recruits and activates the Arp2/3 complex to induce actin polymerization, playing a key role in the fission of tubules that serve as transport intermediates during endosome sorting. Acts as a component of the DHIC (ddl-1-containing hsf-1 inhibitory complex) which modulates lifespan by sequestering the heat shock transcription factor hsf-1 to negatively regulate its binding to DNA and its transcriptional activity. The sequence is that of WASH complex subunit homolog 1 from Caenorhabditis elegans.